The chain runs to 365 residues: tRNA-specific 2-thiouridylase MnmA (365 aa).

ATP contacts are provided by residues 12–19 and M38; that span reads AMSGGVDS. C108 serves as the catalytic Nucleophile. C108 and C206 are joined by a disulfide. Residue G132 participates in ATP binding. The tract at residues 156 to 158 is interaction with tRNA; the sequence is KDQ. C206 (cysteine persulfide intermediate) is an active-site residue. Positions 312 to 313 are interaction with tRNA; sequence RY.

It belongs to the MnmA/TRMU family.

It localises to the cytoplasm. The catalysed reaction is S-sulfanyl-L-cysteinyl-[protein] + uridine(34) in tRNA + AH2 + ATP = 2-thiouridine(34) in tRNA + L-cysteinyl-[protein] + A + AMP + diphosphate + H(+). Catalyzes the 2-thiolation of uridine at the wobble position (U34) of tRNA, leading to the formation of s(2)U34. In Carboxydothermus hydrogenoformans (strain ATCC BAA-161 / DSM 6008 / Z-2901), this protein is tRNA-specific 2-thiouridylase MnmA.